The sequence spans 611 residues: Threonine--tRNA ligase (611 aa).

Positions 1–25 (MAGPDRKPVSSAAATTPAPSAPVVL) are disordered. A compositionally biased stretch (low complexity) spans 9–24 (VSSAAATTPAPSAPVV). Positions 209-502 (DHRRIGKDLD…MTENYAGDYP (294 aa)) are catalytic. Residues cysteine 302, histidine 353, and histidine 479 each coordinate Zn(2+).

The protein belongs to the class-II aminoacyl-tRNA synthetase family. In terms of assembly, homodimer. Zn(2+) is required as a cofactor.

It is found in the cytoplasm. It catalyses the reaction tRNA(Thr) + L-threonine + ATP = L-threonyl-tRNA(Thr) + AMP + diphosphate + H(+). Its function is as follows. Catalyzes the attachment of threonine to tRNA(Thr) in a two-step reaction: L-threonine is first activated by ATP to form Thr-AMP and then transferred to the acceptor end of tRNA(Thr). Also edits incorrectly charged L-seryl-tRNA(Thr). The chain is Threonine--tRNA ligase from Parasynechococcus marenigrum (strain WH8102).